A 251-amino-acid polypeptide reads, in one-letter code: Aquaporin (251 aa).

The Cytoplasmic segment spans residues 1–11 (MAKEALKTLQS). A helical membrane pass occupies residues 12 to 32 (MFGEMVASFVFGFAVYSAILG). Over 33–42 (SSISQSSADK) the chain is Extracellular. A helical transmembrane segment spans residues 43–63 (VIVGLTVGFSGIGVIYSFCDV). Over 64–86 (TIAHFNPAITLAAILTSKIDVLQ) the chain is Cytoplasmic. Residues 69 to 71 (NPA) carry the NPA motif. A helical membrane pass occupies residues 87–107 (GLGYMLAQYIGFMLAVCALLV). Residues 108–133 (CSPVEYKETLDTIRPGPTDFGATSLN) lie on the Extracellular side of the membrane. A helical membrane pass occupies residues 134 to 154 (VFFAEFFLTAIFVHIVFATAV). Over 155 to 179 (NPYKPKVDTEGKFVDPDEKEPVDRR) the chain is Cytoplasmic. Residues 180–200 (ITAPLCIGLTLGFLAFMGLAS) form a helical membrane-spanning segment. The Extracellular portion of the chain corresponds to 201–224 (SGGAFNPGLTFAPMAMSNTWSHFW). Positions 206–208 (NPG) match the NPG motif. Residues 225-245 (IYLGGQYLGGLTGGLLQVLVL) form a helical membrane-spanning segment. Over 246 to 251 (YKLSSD) the chain is Cytoplasmic.

This sequence belongs to the MIP/aquaporin (TC 1.A.8) family.

It is found in the cell membrane. Functionally, water channel required to facilitate the transport of water across membranes. Involved in osmotolerance. The protein is Aquaporin (AQP) of Encephalitozoon intestinalis (Microsporidian parasite).